Consider the following 299-residue polypeptide: Acetylglutamate kinase (299 aa).

Substrate contacts are provided by residues 72–73 (GG), arginine 94, and asparagine 196.

The protein belongs to the acetylglutamate kinase family. ArgB subfamily.

Its subcellular location is the cytoplasm. The catalysed reaction is N-acetyl-L-glutamate + ATP = N-acetyl-L-glutamyl 5-phosphate + ADP. The protein operates within amino-acid biosynthesis; L-arginine biosynthesis; N(2)-acetyl-L-ornithine from L-glutamate: step 2/4. Its function is as follows. Catalyzes the ATP-dependent phosphorylation of N-acetyl-L-glutamate. This Burkholderia thailandensis (strain ATCC 700388 / DSM 13276 / CCUG 48851 / CIP 106301 / E264) protein is Acetylglutamate kinase.